We begin with the raw amino-acid sequence, 74 residues long: Protein SlyX homolog (74 aa).

Belongs to the SlyX family.

The polypeptide is Protein SlyX homolog (Neisseria meningitidis serogroup C / serotype 2a (strain ATCC 700532 / DSM 15464 / FAM18)).